The sequence spans 310 residues: MTFSALPFRRADRRRLLAAALAACALTLTAACDSGTVTVPVTDSVTTSAVADPRFAELETTSGARLGVFAVDTGSGRTVAHRADERFPMASTFKGLACGALLREHPLSTGYFDQVIHYSAAELVEYSPVTETRVETGMTVRELCDAAITVSDNTAGNQLLKLLGGPEGFTASLRSLGDATSRLDRWETDLNTAIPGDERDTTTPAALAADYRALVVGDVLGAPERDQLKAWLVANTTGATRIRAGLPADWTVGDKTGSPAYGSALDVAVAWPPGRAPIVIAVLSTKSEQDAEPDNALLAEATRVVVDALG.

The signal sequence occupies residues 1–31; sequence MTFSALPFRRADRRRLLAAALAACALTLTAA. C32 carries the N-palmitoyl cysteine lipid modification. C32 carries S-diacylglycerol cysteine lipidation. The active-site Acyl-ester intermediate is S91. S151 lines the substrate pocket. E187 serves as the catalytic Proton acceptor. Residue 255–257 coordinates substrate; that stretch reads KTG.

The protein belongs to the class-A beta-lactamase family.

It is found in the cell membrane. It carries out the reaction a beta-lactam + H2O = a substituted beta-amino acid. With respect to regulation, inhibited by clavulanic acid. Its function is as follows. Confers high levels of resistance to amoxicillin, benzylpenicillin, piperacillin, ticarcillin and cephalothin. Not active against ceftazidime, cefotaxime and aztreonam. In Nocardia asteroides, this protein is Beta-lactamase AST-1 (bla).